Reading from the N-terminus, the 104-residue chain is uncharacterized protein (104 aa).

The 102-residue stretch at 3–104 (VFEKIIQGEI…HFHILSGDKH (102 aa)) folds into the HIT domain. The short motif at 93 to 97 (HLHFH) is the Histidine triad motif element.

This is an uncharacterized protein from Helicobacter pylori (strain J99 / ATCC 700824) (Campylobacter pylori J99).